The chain runs to 66 residues: Protein translocase subunit SecE (66 aa).

A helical membrane pass occupies residues 29 to 49 (LVASTLVVVVAVFIFSLTCLV).

The protein belongs to the SecE/SEC61-gamma family. In terms of assembly, component of the Sec protein translocase complex. Heterotrimer consisting of SecY, SecE and SecG subunits. The heterotrimers can form oligomers, although 1 heterotrimer is thought to be able to translocate proteins. Interacts with the ribosome. Interacts with SecDF, and other proteins may be involved. Interacts with SecA.

The protein resides in the cell inner membrane. Its function is as follows. Essential subunit of the Sec protein translocation channel SecYEG. Clamps together the 2 halves of SecY. May contact the channel plug during translocation. This is Protein translocase subunit SecE from Rickettsia rickettsii.